The chain runs to 453 residues: Adenylyltransferase and sulfurtransferase MOCS3 (453 aa).

Thr-62 bears the Phosphothreonine mark. ATP contacts are provided by residues Gly-101, Asp-122, 129-133, Lys-146, and 190-191; these read SNFHR and DN. Residues Cys-231 and Cys-234 each contribute to the Zn(2+) site. Cys-248 serves as the catalytic Glycyl thioester intermediate; for adenylyltransferase activity. Zn(2+)-binding residues include Cys-306 and Cys-309. The 97-residue stretch at 355-451 folds into the Rhodanese domain; the sequence is QAQPHLLIDV…WTNSVDPSFP (97 aa). The active-site Cysteine persulfide intermediate; for sulfurtransferase activity is Cys-410.

In the N-terminal section; belongs to the HesA/MoeB/ThiF family. UBA4 subfamily. Zn(2+) is required as a cofactor.

The protein resides in the cytoplasm. It is found in the cytosol. It catalyses the reaction [molybdopterin-synthase sulfur-carrier protein]-C-terminal Gly-Gly + ATP + H(+) = [molybdopterin-synthase sulfur-carrier protein]-C-terminal Gly-Gly-AMP + diphosphate. The catalysed reaction is [molybdopterin-synthase sulfur-carrier protein]-C-terminal Gly-Gly-AMP + S-sulfanyl-L-cysteinyl-[cysteine desulfurase] + AH2 = [molybdopterin-synthase sulfur-carrier protein]-C-terminal-Gly-aminoethanethioate + L-cysteinyl-[cysteine desulfurase] + A + AMP + 2 H(+). Its pathway is tRNA modification; 5-methoxycarbonylmethyl-2-thiouridine-tRNA biosynthesis. It participates in cofactor biosynthesis; molybdopterin biosynthesis. Plays a central role in 2-thiolation of mcm(5)S(2)U at tRNA wobble positions of cytosolic tRNA(Lys), tRNA(Glu) and tRNA(Gln). Also essential during biosynthesis of the molybdenum cofactor. Acts by mediating the C-terminal thiocarboxylation of sulfur carriers URM1 and MOCS2A. Its N-terminus first activates URM1 and MOCS2A as acyl-adenylates (-COAMP), then the persulfide sulfur on the catalytic cysteine is transferred to URM1 and MOCS2A to form thiocarboxylation (-COSH) of their C-terminus. The reaction probably involves hydrogen sulfide that is generated from the persulfide intermediate and that acts as a nucleophile towards URM1 and MOCS2A. Subsequently, a transient disulfide bond is formed. Does not use thiosulfate as sulfur donor; NFS1 probably acting as a sulfur donor for thiocarboxylation reactions. The polypeptide is Adenylyltransferase and sulfurtransferase MOCS3 (Drosophila yakuba (Fruit fly)).